Consider the following 113-residue polypeptide: DNA-directed RNA polymerase subunit omega (113 aa).

Belongs to the RNA polymerase subunit omega family. As to quaternary structure, the RNAP catalytic core consists of 2 alpha, 1 beta, 1 beta' and 1 omega subunit. When a sigma factor is associated with the core the holoenzyme is formed, which can initiate transcription.

The catalysed reaction is RNA(n) + a ribonucleoside 5'-triphosphate = RNA(n+1) + diphosphate. Functionally, promotes RNA polymerase assembly. Latches the N- and C-terminal regions of the beta' subunit thereby facilitating its interaction with the beta and alpha subunits. This is DNA-directed RNA polymerase subunit omega from Rhizorhabdus wittichii (strain DSM 6014 / CCUG 31198 / JCM 15750 / NBRC 105917 / EY 4224 / RW1) (Sphingomonas wittichii).